Here is a 1288-residue protein sequence, read N- to C-terminus: Disease resistance protein RRS1 (1288 aa).

One can recognise a TIR domain in the interval 5 to 146 (EKDEEFVCIS…EIVRDVYETH (142 aa)). An important for interaction with RPS4 region spans residues 25–26 (SH). An NB-ARC domain is found at 170-421 (IGIRCVGIWG…LLEGCGFFPH (252 aa)). 179–186 (GMPGIGKT) provides a ligand contact to ATP. LRR repeat units lie at residues 498 to 522 (SEEIEGLFLDTSNLRFDLQPSAFKN), 535 to 553 (NPEVHPVINFPTGSLHSLP), 554 to 575 (NELRLLHWENYPLKSLPQNFDP), 577 to 598 (HLVEINMPYSQLQKLWGGTKNL), 621 to 646 (AENLEVIDLQGCTRLQNFPAAGRLLR), 665 to 688 (PPNIEKLHLQGTGILALPVSTVKP), 697 to 720 (LTEIPGLSEELERLTSLLESNSSC), 740 to 764 (LPNMANLDLNVLDLSGCSSLNSIQG), 766 to 791 (PRFLKQLYLGGTAIREVPQLPQSLEI), 792 to 807 (LNAHGSCLRSLPNMAN), 808 to 829 (LEFLKVLDLSGCSELETIQGFP), and 830 to 852 (RNLKELYFAGTTLREVPQLPLSL). The short motif at 986–1003 (RKFHCWAPWQVVPKVRKD) is the Nuclear localization signal element. Positions 1202–1270 (IPAIDEGDLW…YLSEHNHPRP (69 aa)) form a DNA-binding region, WRKY. The segment at 1267–1288 (HPRPTKRKALADSTRSTSSSIC) is disordered. Polar residues predominate over residues 1279–1288 (STRSTSSSIC).

This sequence belongs to the disease resistance TIR-NB-LRR family. As to quaternary structure, interacts with PopP2, a R.solanacearum type III effector. Interacts with RPS4.

The protein resides in the nucleus. It localises to the cytoplasm. In terms of biological role, transcription factor. Interacts specifically with the W box (5'-(T)TGAC[CT]-3'), a frequently occurring elicitor-responsive cis-acting element. Also acts as a disease resistance protein involved in resistance to fungal and bacterial pathogens, including R.solanacearum, P.syringae pv. tomato and C.higginsianum. Heterodimerization with RPS4 is required to form a functional complex to recognize AvrRps4 and PopP2. Contributes to temperature-conditioned RPS4 auto-immunity. This is Disease resistance protein RRS1 from Arabidopsis thaliana (Mouse-ear cress).